Reading from the N-terminus, the 354-residue chain is Inositol-tetrakisphosphate 1-kinase 1 (354 aa).

Residues 1 to 16 (MRVHEEASEDKEREVE) show a composition bias toward basic and acidic residues. The interval 1–24 (MRVHEEASEDKEREVEEAPDLMPL) is disordered. Residues Lys53 and Lys95 each coordinate 1D-myo-inositol 1,3,4-trisphosphate. Arg130 and Lys180 together coordinate ATP. In terms of domain architecture, ATP-grasp spans 140 to 347 (LNLSNAYGEV…FLLSLVQNKY (208 aa)). 1D-myo-inositol 1,3,4-trisphosphate contacts are provided by His191 and Lys223. ATP is bound by residues 212 to 223 (QEFVNHGGILFK) and Ser238. 3 residues coordinate Mg(2+): Asp303, Asp318, and Asn320. Asn320 lines the 1D-myo-inositol 1,3,4-trisphosphate pocket.

The protein belongs to the ITPK1 family. As to quaternary structure, monomer. The cofactor is Mg(2+). Expressed in roots, leaves, flowers, anthers and embryos.

It carries out the reaction 1D-myo-inositol 3,4,5,6-tetrakisphosphate + ATP = 1D-myo-inositol 1,3,4,5,6-pentakisphosphate + ADP + H(+). It catalyses the reaction 1D-myo-inositol 1,3,4-trisphosphate + ATP = 1D-myo-inositol 1,3,4,5-tetrakisphosphate + ADP + H(+). The enzyme catalyses 1D-myo-inositol 1,3,4-trisphosphate + ATP = 1D-myo-inositol 1,3,4,6-tetrakisphosphate + ADP + H(+). Functionally, kinase that can phosphorylate various inositol polyphosphate such as Ins(3,4,5,6)P4 or Ins(1,3,4)P3 and participates in phytic acid biosynthesis in developing seeds. Phytic acid is the primary storage form of phosphorus in cereal grains and other plant seeds. The chain is Inositol-tetrakisphosphate 1-kinase 1 from Oryza sativa subsp. japonica (Rice).